Here is a 246-residue protein sequence, read N- to C-terminus: Biosynthetic peptidoglycan transglycosylase (246 aa).

A helical transmembrane segment spans residues 20 to 42 (WLRWLMAAPLLFAAASVLQVLIL).

This sequence belongs to the glycosyltransferase 51 family.

It localises to the cell inner membrane. The catalysed reaction is [GlcNAc-(1-&gt;4)-Mur2Ac(oyl-L-Ala-gamma-D-Glu-L-Lys-D-Ala-D-Ala)](n)-di-trans,octa-cis-undecaprenyl diphosphate + beta-D-GlcNAc-(1-&gt;4)-Mur2Ac(oyl-L-Ala-gamma-D-Glu-L-Lys-D-Ala-D-Ala)-di-trans,octa-cis-undecaprenyl diphosphate = [GlcNAc-(1-&gt;4)-Mur2Ac(oyl-L-Ala-gamma-D-Glu-L-Lys-D-Ala-D-Ala)](n+1)-di-trans,octa-cis-undecaprenyl diphosphate + di-trans,octa-cis-undecaprenyl diphosphate + H(+). Its pathway is cell wall biogenesis; peptidoglycan biosynthesis. Functionally, peptidoglycan polymerase that catalyzes glycan chain elongation from lipid-linked precursors. This Xanthomonas axonopodis pv. citri (strain 306) protein is Biosynthetic peptidoglycan transglycosylase.